A 427-amino-acid polypeptide reads, in one-letter code: Peptidase B (427 aa).

The Mn(2+) site is built by lysine 195 and aspartate 200. The active site involves lysine 207. 3 residues coordinate Mn(2+): aspartate 218, aspartate 277, and glutamate 279. Residue arginine 281 is part of the active site.

The protein belongs to the peptidase M17 family. As to quaternary structure, homohexamer. Mn(2+) serves as cofactor.

Its subcellular location is the cytoplasm. The enzyme catalyses Release of an N-terminal amino acid, Xaa, from a peptide or arylamide. Xaa is preferably Glu or Asp but may be other amino acids, including Leu, Met, His, Cys and Gln.. Probably plays an important role in intracellular peptide degradation. The protein is Peptidase B of Escherichia coli (strain UTI89 / UPEC).